The sequence spans 196 residues: Probable GTP-binding protein EngB (196 aa).

In terms of domain architecture, EngB-type G spans 22-196 (NLPEIALSGR…GNWIEEKISK (175 aa)). Residues 30–37 (GRSNVGKS), 57–61 (GKTQT), 75–78 (DVPG), 142–145 (TKID), and 175–177 (FSS) each bind GTP. The Mg(2+) site is built by serine 37 and threonine 59.

Belongs to the TRAFAC class TrmE-Era-EngA-EngB-Septin-like GTPase superfamily. EngB GTPase family. Mg(2+) is required as a cofactor.

In terms of biological role, necessary for normal cell division and for the maintenance of normal septation. This is Probable GTP-binding protein EngB from Lactobacillus helveticus (strain DPC 4571).